Reading from the N-terminus, the 255-residue chain is Ribonuclease HII (255 aa).

The RNase H type-2 domain occupies 72 to 255 (AIICGIDEVG…KSFEPIKSLL (184 aa)). A divalent metal cation contacts are provided by Asp-78, Glu-79, and Asp-170.

Belongs to the RNase HII family. Mn(2+) serves as cofactor. The cofactor is Mg(2+).

It is found in the cytoplasm. It carries out the reaction Endonucleolytic cleavage to 5'-phosphomonoester.. Its function is as follows. Endonuclease that specifically degrades the RNA of RNA-DNA hybrids. In Staphylococcus aureus (strain MSSA476), this protein is Ribonuclease HII.